The chain runs to 126 residues: Small ribosomal subunit protein uS13 (126 aa).

The segment at 94-126 (RGLPVHGQRTSTNARTRKGPRRAIAGKKKPGKK) is disordered. Over residues 108–126 (RTRKGPRRAIAGKKKPGKK) the composition is skewed to basic residues.

This sequence belongs to the universal ribosomal protein uS13 family. In terms of assembly, part of the 30S ribosomal subunit. Forms a loose heterodimer with protein S19. Forms two bridges to the 50S subunit in the 70S ribosome.

In terms of biological role, located at the top of the head of the 30S subunit, it contacts several helices of the 16S rRNA. In the 70S ribosome it contacts the 23S rRNA (bridge B1a) and protein L5 of the 50S subunit (bridge B1b), connecting the 2 subunits; these bridges are implicated in subunit movement. Contacts the tRNAs in the A and P-sites. The chain is Small ribosomal subunit protein uS13 from Streptomyces griseus subsp. griseus (strain JCM 4626 / CBS 651.72 / NBRC 13350 / KCC S-0626 / ISP 5235).